The following is a 22-amino-acid chain: uncharacterized protein (22 aa).

It belongs to the asfivirus C84L family.

This is an uncharacterized protein from Ornithodoros (relapsing fever ticks).